A 743-amino-acid polypeptide reads, in one-letter code: Merozoite surface protein 9 (743 aa).

Positions 1 to 23 (MMNMKIVLFSLLLFVIRWNIISC) are cleaved as a signal peptide. Residues 77–235 (KELLKEKQYT…VNDEDDVNDE (159 aa)) form an interaction with MSP1 and host SLC4A1/Band 3 region. 4 disordered regions span residues 202-282 (KSQG…ATAY), 459-487 (DNQA…PTED), 512-540 (NNTP…ENFD), and 666-743 (VDAL…EESK). The span at 211–224 (SQNQNENNDNQKYQ) shows a compositional bias: polar residues. 8 consecutive repeat copies span residues 226–231 (VNDEDD), 232–237 (VNDEED), 238–243 (TNDDED), 244–249 (TNDEED), 250–255 (TNDDED), 256–261 (TNDDED), 262–267 (TNDEED), and 268–273 (TNDEED). The interval 226-273 (VNDEDDVNDEEDTNDDEDTNDEEDTNDDEDTNDDEDTNDEEDTNDEED) is 8 X 6 AA tandem repeats of [VT]-N-D-[ED]-[ED]-D. The segment covering 226–274 (VNDEDDVNDEEDTNDDEDTNDEEDTNDDEDTNDDEDTNDEEDTNDEEDH) has biased composition (acidic residues). The tract at residues 364-528 (LKDNLINYEF…PPTQSKKKNK (165 aa)) is interaction with MSP1 and host SLC4A1/Band 3. Positions 459-473 (DNQAVDTKSMEEPKV) are enriched in basic and acidic residues. The segment covering 512–521 (NNTPNVVPPT) has biased composition (low complexity). Residues 644 to 733 (NQETEEEMEK…QEEEEEEEIV (90 aa)) are a coiled coil. Positions 672–721 (KNKEEEEKEKEKEEKEKEEKEKEKEEKEKEEKEKEEKEKEEKEEEKKEKE) are enriched in basic and acidic residues. The span at 722 to 733 (EEQEEEEEEEIV) shows a compositional bias: acidic residues.

This sequence belongs to the plasmodium ABRA family. As to quaternary structure, forms a complex composed of MSP1, MSP6, MSP7, MSP9 and MSP3; within the complex, MSP6 and MSP9 mediate the binding to the host erythrocyte. Interacts with MSP1 subunits p19 and p42; the interaction is direct. Interacts with host SLC4A1/Band 3 protein (via the 5ABC region). MSP1 subunits p19 or p42, and MSP9 form a co-ligand complex that interacts with host SLC4A1/Band 3 protein. Post-translationally, not glycosylated.

The protein localises to the cell membrane. It localises to the parasitophorous vacuole lumen. The protein resides in the secreted. Its function is as follows. During the asexual blood stage, involved in the sialic acid-independent (SAID) merozoite invasion of host erythrocytes by binding to host SLC4A1/Band 3 protein on the surface of the host erythrocyte. In Plasmodium falciparum (isolate 3D7), this protein is Merozoite surface protein 9.